Reading from the N-terminus, the 445-residue chain is Gamma-glutamyl phosphate reductase (445 aa).

Belongs to the gamma-glutamyl phosphate reductase family.

It localises to the cytoplasm. It carries out the reaction L-glutamate 5-semialdehyde + phosphate + NADP(+) = L-glutamyl 5-phosphate + NADPH + H(+). Its pathway is amino-acid biosynthesis; L-proline biosynthesis; L-glutamate 5-semialdehyde from L-glutamate: step 2/2. Its function is as follows. Catalyzes the NADPH-dependent reduction of L-glutamate 5-phosphate into L-glutamate 5-semialdehyde and phosphate. The product spontaneously undergoes cyclization to form 1-pyrroline-5-carboxylate. This is Gamma-glutamyl phosphate reductase from Saccharopolyspora erythraea (strain ATCC 11635 / DSM 40517 / JCM 4748 / NBRC 13426 / NCIMB 8594 / NRRL 2338).